The sequence spans 132 residues: ATP synthase epsilon chain (132 aa).

Belongs to the ATPase epsilon chain family. As to quaternary structure, F-type ATPases have 2 components, CF(1) - the catalytic core - and CF(0) - the membrane proton channel. CF(1) has five subunits: alpha(3), beta(3), gamma(1), delta(1), epsilon(1). CF(0) has three main subunits: a, b and c.

Its subcellular location is the cell membrane. Functionally, produces ATP from ADP in the presence of a proton gradient across the membrane. In Geobacillus stearothermophilus (Bacillus stearothermophilus), this protein is ATP synthase epsilon chain (atpC).